The following is an 882-amino-acid chain: Alanine--tRNA ligase (882 aa).

The Zn(2+) site is built by H570, H574, C672, and H676.

The protein belongs to the class-II aminoacyl-tRNA synthetase family. Zn(2+) is required as a cofactor.

The protein localises to the cytoplasm. The enzyme catalyses tRNA(Ala) + L-alanine + ATP = L-alanyl-tRNA(Ala) + AMP + diphosphate. In terms of biological role, catalyzes the attachment of alanine to tRNA(Ala) in a two-step reaction: alanine is first activated by ATP to form Ala-AMP and then transferred to the acceptor end of tRNA(Ala). Also edits incorrectly charged Ser-tRNA(Ala) and Gly-tRNA(Ala) via its editing domain. This chain is Alanine--tRNA ligase, found in Xanthomonas oryzae pv. oryzae (strain MAFF 311018).